A 511-amino-acid polypeptide reads, in one-letter code: Aldehyde dehydrogenase 2, mitochondrial (511 aa).

Residues 1-21 (MSKSKTKTDKRNQSSLSRIKL) constitute a mitochondrion transit peptide. Positions 72 to 92 (VSEKSQHDSTEEDITQVSEKS) are disordered. 274–279 (GSTLVG) lines the NAD(+) pocket. Glutamate 297 functions as the Proton acceptor in the catalytic mechanism. Residue cysteine 331 is the Nucleophile of the active site.

Belongs to the aldehyde dehydrogenase family.

It localises to the mitochondrion matrix. The enzyme catalyses an aldehyde + NAD(+) + H2O = a carboxylate + NADH + 2 H(+). It functions in the pathway alcohol metabolism; ethanol degradation; acetate from ethanol: step 2/2. In Saccharomyces cerevisiae (Baker's yeast), this protein is Aldehyde dehydrogenase 2, mitochondrial (ALD2).